Consider the following 543-residue polypeptide: Periplasmic oligopeptide-binding protein OppA (543 aa).

A signal peptide spans 1-26 (MTNITKRSLVAAGVLAALMAGNVALA). Cysteine 297 and cysteine 443 are oxidised to a cystine.

This sequence belongs to the bacterial solute-binding protein 5 family. The complex is composed of two ATP-binding proteins (OppD and OppF), two transmembrane proteins (OppB and OppC) and a solute-binding protein (OppA).

It is found in the periplasm. Part of the ABC transporter complex OppABCDF involved in the uptake of oligopeptides. Plays an important nutritional role. Binds peptides containing from two to five amino acid residues. Displays a preference for tripeptides and tetrapeptides over dipeptides and pentapeptides, for peptides composed of L-amino acids and for positively charged peptides. Cannot bind the cell wall peptide L-Ala-D-Gly-gamma-meso-diaminopimelic acid. This Escherichia coli (strain K12) protein is Periplasmic oligopeptide-binding protein OppA.